The sequence spans 122 residues: Small ribosomal subunit protein uS12cz/uS12cy (122 aa).

Belongs to the universal ribosomal protein uS12 family. Part of the 30S ribosomal subunit.

It is found in the plastid. It localises to the chloroplast. With S4 and S5 plays an important role in translational accuracy. Located at the interface of the 30S and 50S subunits. This Triticum aestivum (Wheat) protein is Small ribosomal subunit protein uS12cz/uS12cy (rps12-A).